The sequence spans 339 residues: D-erythrose-4-phosphate dehydrogenase (339 aa).

Residues 12–13 and arginine 81 contribute to the NAD(+) site; that span reads RI. Substrate is bound by residues 154–156, arginine 200, 213–214, and arginine 236; these read SCT and TK. Cysteine 155 functions as the Nucleophile in the catalytic mechanism. Asparagine 318 contacts NAD(+).

As to quaternary structure, homotetramer.

It is found in the cytoplasm. It catalyses the reaction D-erythrose 4-phosphate + NAD(+) + H2O = 4-phospho-D-erythronate + NADH + 2 H(+). It participates in cofactor biosynthesis; pyridoxine 5'-phosphate biosynthesis; pyridoxine 5'-phosphate from D-erythrose 4-phosphate: step 1/5. Functionally, catalyzes the NAD-dependent conversion of D-erythrose 4-phosphate to 4-phosphoerythronate. The protein is D-erythrose-4-phosphate dehydrogenase (epd) of Escherichia coli (strain K12).